The following is a 99-amino-acid chain: Large ribosomal subunit protein uL23 (99 aa).

It belongs to the universal ribosomal protein uL23 family. As to quaternary structure, part of the 50S ribosomal subunit. Contacts protein L29, and trigger factor when it is bound to the ribosome.

Its function is as follows. One of the early assembly proteins it binds 23S rRNA. One of the proteins that surrounds the polypeptide exit tunnel on the outside of the ribosome. Forms the main docking site for trigger factor binding to the ribosome. The sequence is that of Large ribosomal subunit protein uL23 from Haemophilus influenzae (strain 86-028NP).